The chain runs to 400 residues: MAP kinase-activated protein kinase 2 (400 aa).

The segment at 1–43 (MLSNSQGQSPPVPFPAPAPPPQPPTPALPHPPAQPPPPPPQQF) is disordered. The residue at position 9 (Ser-9) is a Phosphoserine. Pro residues predominate over residues 10–42 (PPVPFPAPAPPPQPPTPALPHPPAQPPPPPPQQ). Position 25 is a phosphothreonine (Thr-25). In terms of domain architecture, Protein kinase spans 64–325 (KVTSQVLGLG…ITEFMNHPWI (262 aa)). Residues 70 to 78 (LGLGINGKV) and Lys-93 each bind ATP. 139 to 141 (ECL) lines the staurosporine pocket. The active-site Proton acceptor is the Asp-186. A Phosphothreonine; by MAPK14 modification is found at Thr-222. Phosphoserine; by MAPK14 is present on Ser-272. The residue at position 328 (Ser-328) is a Phosphoserine; by autocatalysis. Positions 328–364 (STKVPQTPLHTSRVLKEDKERWEDVKEEMTSALATMR) are autoinhibitory helix. Thr-334 carries the post-translational modification Phosphothreonine; by MAPK14. Lys-353 participates in a covalent cross-link: Glycyl lysine isopeptide (Lys-Gly) (interchain with G-Cter in SUMO). Positions 356–365 (MTSALATMRV) match the Nuclear export signal (NES) motif. Positions 366–390 (DYEQIKIKKIEDASNPLLLKRRKKA) are p38 MAPK-binding site. Short sequence motifs (bipartite nuclear localization signal) lie at residues 371 to 374 (KIKK) and 385 to 389 (KRRKK).

This sequence belongs to the protein kinase superfamily. CAMK Ser/Thr protein kinase family. In terms of assembly, heterodimer with p38-alpha/MAPK14; this heterodimer forms a stable complex: molecules are positioned 'face to face' so that the ATP-binding sites of both kinases are at the heterodimer interface. Interacts with PHC2. Interacts with HSF1. Sumoylation inhibits the protein kinase activity. Post-translationally, phosphorylated and activated by MAP kinase p38-alpha/MAPK14 at Thr-222, Ser-272 and Thr-334. As to expression, expressed in all tissues examined.

The protein resides in the cytoplasm. It is found in the nucleus. It carries out the reaction L-seryl-[protein] + ATP = O-phospho-L-seryl-[protein] + ADP + H(+). The catalysed reaction is L-threonyl-[protein] + ATP = O-phospho-L-threonyl-[protein] + ADP + H(+). With respect to regulation, activated following phosphorylation by p38-alpha/MAPK14 following various stresses. Inhibited following sumoylation. Specifically inhibited by pyrrolopyridine inhibitors. Stress-activated serine/threonine-protein kinase involved in cytokine production, endocytosis, reorganization of the cytoskeleton, cell migration, cell cycle control, chromatin remodeling, DNA damage response and transcriptional regulation. Following stress, it is phosphorylated and activated by MAP kinase p38-alpha/MAPK14, leading to phosphorylation of substrates. Phosphorylates serine in the peptide sequence, Hyd-X-R-X(2)-S, where Hyd is a large hydrophobic residue. Phosphorylates ALOX5, CDC25B, CDC25C, CEP131, ELAVL1, HNRNPA0, HSP27/HSPB1, KRT18, KRT20, LIMK1, LSP1, PABPC1, PARN, PDE4A, RCSD1, RPS6KA3, TAB3 and TTP/ZFP36. Phosphorylates HSF1; leading to the interaction with HSP90 proteins and inhibiting HSF1 homotrimerization, DNA-binding and transactivation activities. Mediates phosphorylation of HSP27/HSPB1 in response to stress, leading to the dissociation of HSP27/HSPB1 from large small heat-shock protein (sHsps) oligomers and impairment of their chaperone activities and ability to protect against oxidative stress effectively. Involved in inflammatory response by regulating tumor necrosis factor (TNF) and IL6 production post-transcriptionally: acts by phosphorylating AU-rich elements (AREs)-binding proteins ELAVL1, HNRNPA0, PABPC1 and TTP/ZFP36, leading to the regulation of the stability and translation of TNF and IL6 mRNAs. Phosphorylation of TTP/ZFP36, a major post-transcriptional regulator of TNF, promotes its binding to 14-3-3 proteins and reduces its ARE mRNA affinity, leading to inhibition of dependent degradation of ARE-containing transcripts. Phosphorylates CEP131 in response to cellular stress induced by ultraviolet irradiation which promotes binding of CEP131 to 14-3-3 proteins and inhibits formation of novel centriolar satellites. Also involved in late G2/M checkpoint following DNA damage through a process of post-transcriptional mRNA stabilization: following DNA damage, relocalizes from nucleus to cytoplasm and phosphorylates HNRNPA0 and PARN, leading to stabilization of GADD45A mRNA. Involved in toll-like receptor signaling pathway (TLR) in dendritic cells: required for acute TLR-induced macropinocytosis by phosphorylating and activating RPS6KA3. The protein is MAP kinase-activated protein kinase 2 (MAPKAPK2) of Homo sapiens (Human).